We begin with the raw amino-acid sequence, 505 residues long: ATP synthase subunit alpha (505 aa).

170 to 177 (GDRQTGKT) provides a ligand contact to ATP.

The protein belongs to the ATPase alpha/beta chains family. In terms of assembly, F-type ATPases have 2 components, CF(1) - the catalytic core - and CF(0) - the membrane proton channel. CF(1) has five subunits: alpha(3), beta(3), gamma(1), delta(1), epsilon(1). CF(0) has four main subunits: a, b, b' and c.

It is found in the cellular thylakoid membrane. The catalysed reaction is ATP + H2O + 4 H(+)(in) = ADP + phosphate + 5 H(+)(out). Produces ATP from ADP in the presence of a proton gradient across the membrane. The alpha chain is a regulatory subunit. This is ATP synthase subunit alpha from Cyanothece sp. (strain PCC 7425 / ATCC 29141).